We begin with the raw amino-acid sequence, 555 residues long: Membrane protein insertase YidC (555 aa).

A helical membrane pass occupies residues 7–24 (ILWVIFSMSLVLLYDNWQ). Residues 62–81 (APGAAGTAAPAAPQAAAQPT) form a disordered region. Helical transmembrane passes span 334–354 (LELVKDYGWLTILAKPLFWLL), 360–380 (FLGNWGWSIIALTVLIKLVFF), 430–450 (LGGCLPIVIQIPVFIALYWVL), 468–488 (LSVPDPFYILPIVMAVSMFVQ), and 503–523 (VMMIMPLVFSVMFFFFPAGLV).

The protein belongs to the OXA1/ALB3/YidC family. Type 1 subfamily. In terms of assembly, interacts with the Sec translocase complex via SecD. Specifically interacts with transmembrane segments of nascent integral membrane proteins during membrane integration.

It localises to the cell inner membrane. Required for the insertion and/or proper folding and/or complex formation of integral membrane proteins into the membrane. Involved in integration of membrane proteins that insert both dependently and independently of the Sec translocase complex, as well as at least some lipoproteins. Aids folding of multispanning membrane proteins. In Cupriavidus necator (strain ATCC 17699 / DSM 428 / KCTC 22496 / NCIMB 10442 / H16 / Stanier 337) (Ralstonia eutropha), this protein is Membrane protein insertase YidC.